Here is a 354-residue protein sequence, read N- to C-terminus: Uroporphyrinogen decarboxylase (354 aa).

Substrate is bound by residues 27–31, aspartate 77, tyrosine 154, serine 209, and histidine 327; that span reads RQAGR.

Belongs to the uroporphyrinogen decarboxylase family. As to quaternary structure, homodimer.

It is found in the cytoplasm. It catalyses the reaction uroporphyrinogen III + 4 H(+) = coproporphyrinogen III + 4 CO2. The protein operates within porphyrin-containing compound metabolism; protoporphyrin-IX biosynthesis; coproporphyrinogen-III from 5-aminolevulinate: step 4/4. In terms of biological role, catalyzes the decarboxylation of four acetate groups of uroporphyrinogen-III to yield coproporphyrinogen-III. The polypeptide is Uroporphyrinogen decarboxylase (Shewanella loihica (strain ATCC BAA-1088 / PV-4)).